Reading from the N-terminus, the 167-residue chain is Biogenesis of lysosome-related organelles complex 1 subunit 6 (167 aa).

Residues 1–11 (MLKSSNINSVL) show a composition bias toward polar residues. Residues 1-38 (MLKSSNINSVLNELPNDPARDSTAQSSHNGKPKQDAET) form a disordered region. The stretch at 102 to 160 (ARLNDMMSDVKRYKDKLTKIKKEMQGVYQRTKELKKRAANVAACKQRDYQRKLERLQHE) forms a coiled coil.

The protein belongs to the BLOC1S6 family. Component of the biogenesis of lysosome-related organelles complex-1 (BLOC-1) composed of Blos1, Blos2, Blos3, Blos4, Dysb, Muted, Pldn and Snapin. Interacts with Blos1, Blos4 and Dysb.

It localises to the synapse. It is found in the cytoplasm. The protein localises to the cytoskeleton. Its subcellular location is the myofibril. The protein resides in the sarcomere. It localises to the z line. Component of the biogenesis of lysosome-related organelles complex-1 (BLOC-1) involved in pigment granule biogenesis and membrane trafficking in synapses. In response to high synaptic activity at neuromuscular junctions, plays a key role in promoting efficient synaptic vesicle recycling and re-formation through early endosomes. This chain is Biogenesis of lysosome-related organelles complex 1 subunit 6, found in Drosophila melanogaster (Fruit fly).